A 775-amino-acid chain; its full sequence is Dipeptidyl peptidase 4 (775 aa).

Positions 1-15 (MKLLSLLMLAGIAQA) are cleaved as a signal peptide. N-linked (GlcNAc...) asparagine glycosylation is found at N81, N111, N170, and N219. Residues S613, D690, and H725 each act as charge relay system in the active site.

This sequence belongs to the peptidase S9B family.

The protein localises to the secreted. The catalysed reaction is Release of an N-terminal dipeptide, Xaa-Yaa-|-Zaa-, from a polypeptide, preferentially when Yaa is Pro, provided Zaa is neither Pro nor hydroxyproline.. In terms of biological role, extracellular dipeptidyl-peptidase which removes N-terminal dipeptides sequentially from polypeptides having unsubstituted N-termini provided that the penultimate residue is proline. Contributes to pathogenicity. The sequence is that of Dipeptidyl peptidase 4 (DPP4) from Trichophyton tonsurans (Scalp ringworm fungus).